The primary structure comprises 130 residues: Small ribosomal subunit protein bS18 (130 aa).

Basic and acidic residues-rich tracts occupy residues 98-108 (KKMEESVKSAE) and 117-130 (EESKPKRTRKAKTE). The disordered stretch occupies residues 98–130 (KKMEESVKSAEPKATAEATEESKPKRTRKAKTE).

It belongs to the bacterial ribosomal protein bS18 family. As to quaternary structure, part of the 30S ribosomal subunit. Forms a tight heterodimer with protein bS6.

In terms of biological role, binds as a heterodimer with protein bS6 to the central domain of the 16S rRNA, where it helps stabilize the platform of the 30S subunit. In Metamycoplasma arthritidis (strain 158L3-1) (Mycoplasma arthritidis), this protein is Small ribosomal subunit protein bS18.